A 155-amino-acid chain; its full sequence is Ribosomal RNA large subunit methyltransferase H (155 aa).

S-adenosyl-L-methionine-binding positions include L72, G103, and 122–127 (LSPLTL).

The protein belongs to the RNA methyltransferase RlmH family. Homodimer.

It is found in the cytoplasm. It catalyses the reaction pseudouridine(1915) in 23S rRNA + S-adenosyl-L-methionine = N(3)-methylpseudouridine(1915) in 23S rRNA + S-adenosyl-L-homocysteine + H(+). Its function is as follows. Specifically methylates the pseudouridine at position 1915 (m3Psi1915) in 23S rRNA. The sequence is that of Ribosomal RNA large subunit methyltransferase H from Aeromonas salmonicida (strain A449).